We begin with the raw amino-acid sequence, 1062 residues long: Integrin alpha-8 (1062 aa).

An N-terminal signal peptide occupies residues 1 to 35 (MSAGTHCGPPGNRAPPFARLCCVSAALGMLWSPAC). Topologically, residues 36 to 1010 (LAFNLDVDKL…ATPNVSFSIP (975 aa)) are extracellular. FG-GAP repeat units lie at residues 41-104 (DVDK…RSAQ), 121-182 (NGTK…AYAE), 187-239 (RNSN…IANY), 252-305 (KQTD…STDM), 306-371 (TFIQ…LLFQ), 372-430 (DPQV…GLHS), and 434-497 (QVLQ…LHPM). The N-linked (GlcNAc...) asparagine glycan is linked to Asn80. The cysteines at positions 95 and 105 are disulfide-linked. N-linked (GlcNAc...) asparagine glycosylation occurs at Asn121. A disulfide bridge connects residues Cys149 and Cys170. Asn176 is a glycosylation site (N-linked (GlcNAc...) asparagine). The cysteines at positions 186 and 199 are disulfide-linked. Asn238 carries N-linked (GlcNAc...) asparagine glycosylation. 4 residues coordinate Ca(2+): Glu274, Thr276, Asp278, and Glu282. Residues Asn301 and Asn310 are each glycosylated (N-linked (GlcNAc...) asparagine). 9 residues coordinate Ca(2+): Asp328, Asn330, Asp332, Asp336, Asp394, Asn396, Asp398, Tyr400, and Asp402. Positions 454-456 (RGD) match the Cell attachment site motif. 5 residues coordinate Ca(2+): Asp458, Asp460, Asn462, Tyr464, and Asp466. An N-linked (GlcNAc...) asparagine glycan is attached at Asn503. Disulfide bonds link Cys506–Cys517 and Cys523–Cys579. N-linked (GlcNAc...) asparagine glycans are attached at residues Asn600 and Asn604. Disulfide bonds link Cys640–Cys646 and Cys712–Cys725. N-linked (GlcNAc...) asparagine glycosylation is found at Asn718, Asn736, Asn752, Asn779, Asn895, and Asn922. 2 disulfide bridges follow: Cys866/Cys923 and Cys928/Cys933. N-linked (GlcNAc...) asparagine glycosylation is present at Asn1004. Residues 1011–1031 (LWVIILAILLGLLVLAILTLA) form a helical membrane-spanning segment. Residues 1032–1062 (LWKCGFFDRARPPQDEMTDREQLTSDKTPEA) lie on the Cytoplasmic side of the membrane.

Belongs to the integrin alpha chain family. As to quaternary structure, heterodimer of an alpha and a beta subunit. The alpha subunit is composed of a heavy and a light chain linked by a disulfide bond. Alpha-8 associates with beta-1. In terms of tissue distribution, in brain, expressed in deep cortex, hippocampal CA1, basolateral amygdala and striatum. In kidney, expressed in glomerular mesengium (at protein level).

The protein resides in the membrane. It localises to the cell membrane. Its function is as follows. Integrin alpha-8/beta-1 functions in the genesis of kidney and probably of other organs by regulating the recruitment of mesenchymal cells into epithelial structures. It recognizes the sequence R-G-D in a wide array of ligands including TNC, FN1, SPP1 TGFB1, TGFB3 and VTN. NPNT is probably its functional ligand in kidney genesis. Neuronal receptor for TNC it mediates cell-cell interactions and regulates neurite outgrowth of sensory and motor neurons. This Mus musculus (Mouse) protein is Integrin alpha-8 (Itga8).